The following is a 295-amino-acid chain: Reticulon-like protein 1 (295 aa).

Over 1-50 the chain is Cytoplasmic; it reads MSASAQHSQAQQQQQQKSCNCDLLLWRNPVQTGKYFGGSLLALLILKKVN. Residues 20-220 form the Reticulon domain; the sequence is NCDLLLWRNP…ISNLVKSKTA (201 aa). Residues 51–73 form a helical membrane-spanning segment; sequence LITFFLKVAYTILFTTGSIEFVS. Topologically, residues 74-142 are lumenal; it reads KLFLGQGLIT…ALFLLHKFFS (69 aa). Residues 143 to 163 traverse the membrane as a helical segment; sequence WFSIWTIVFVADIFTFTLPVI. The Cytoplasmic segment spans residues 164–295; it reads YHSYKHEIDA…LQNELEKNNA (132 aa). A phosphothreonine mark is found at Thr186 and Thr219. Over residues 219 to 235 the composition is skewed to polar residues; sequence TAPVSSTAGPQTASTSK. The interval 219–295 is disordered; the sequence is TAPVSSTAGP…LQNELEKNNA (77 aa). Ser232 is subject to Phosphoserine. Residues 265–295 adopt a coiled-coil conformation; that stretch reads STTQEFNVDELSNELKKSTKNLQNELEKNNA.

In terms of assembly, interacts with POM33.

The protein localises to the endoplasmic reticulum membrane. The sequence is that of Reticulon-like protein 1 (RTN1) from Saccharomyces cerevisiae (strain ATCC 204508 / S288c) (Baker's yeast).